The chain runs to 185 residues: Ribosome-recycling factor (185 aa).

This sequence belongs to the RRF family.

It is found in the cytoplasm. Its function is as follows. Responsible for the release of ribosomes from messenger RNA at the termination of protein biosynthesis. May increase the efficiency of translation by recycling ribosomes from one round of translation to another. In Geobacillus sp. (strain WCH70), this protein is Ribosome-recycling factor.